Consider the following 460-residue polypeptide: Elongation factor 1-alpha (460 aa).

Gly2 is subject to N,N,N-trimethylglycine. Lys3 carries the post-translational modification N6,N6-dimethyllysine; alternate. Lys3 carries the post-translational modification N6-methyllysine; alternate. The 236-residue stretch at 6-241 folds into the tr-type G domain; the sequence is KAHINVVVIG…DAIEQPKRPT (236 aa). The tract at residues 15–22 is G1; that stretch reads GHVDSGKS. GTP is bound at residue 15–22; sequence GHVDSGKS. Lys31 is subject to N6-methyllysine. Positions 71–75 are G2; the sequence is GITID. Lys80 carries the N6,N6,N6-trimethyllysine modification. The G3 stretch occupies residues 92 to 95; it reads DAPG. GTP is bound by residues 92–96 and 154–157; these read DAPGH and NKMD. Positions 154-157 are G4; that stretch reads NKMD. Positions 193–195 are G5; sequence SGF. Position 317 is an N6,N6-dimethyllysine; alternate (Lys317). Position 317 is an N6-methyllysine; alternate (Lys317). Lys391 is modified (N6-methyllysine).

It belongs to the TRAFAC class translation factor GTPase superfamily. Classic translation factor GTPase family. EF-Tu/EF-1A subfamily.

Its subcellular location is the cytoplasm. This protein promotes the GTP-dependent binding of aminoacyl-tRNA to the A-site of ribosomes during protein biosynthesis. This is Elongation factor 1-alpha (TEF) from Sordaria macrospora.